A 438-amino-acid polypeptide reads, in one-letter code: 23S rRNA (uracil(1939)-C(5))-methyltransferase RlmD (438 aa).

A TRAM domain is found at 11-69 (LQPESKHQQVLVEKLDHQGAGIAYLNKKPLFIDGTLPGEEVVTQLTESKSKFARGKLIK). C82, C88, C91, and C169 together coordinate [4Fe-4S] cluster. Q272, F301, N306, E322, N349, and D370 together coordinate S-adenosyl-L-methionine. Residue C396 is the Nucleophile of the active site.

It belongs to the class I-like SAM-binding methyltransferase superfamily. RNA M5U methyltransferase family. RlmD subfamily.

It catalyses the reaction uridine(1939) in 23S rRNA + S-adenosyl-L-methionine = 5-methyluridine(1939) in 23S rRNA + S-adenosyl-L-homocysteine + H(+). Functionally, catalyzes the formation of 5-methyl-uridine at position 1939 (m5U1939) in 23S rRNA. This is 23S rRNA (uracil(1939)-C(5))-methyltransferase RlmD from Vibrio vulnificus (strain YJ016).